Consider the following 145-residue polypeptide: Sec-independent protein translocase protein TatB (145 aa).

A helical transmembrane segment spans residues 1-21; it reads MLDVGMTELLCFAIIAILVLG.

This sequence belongs to the TatB family. In terms of assembly, the Tat system comprises two distinct complexes: a TatABC complex, containing multiple copies of TatA, TatB and TatC subunits, and a separate TatA complex, containing only TatA subunits. Substrates initially bind to the TatABC complex, which probably triggers association of the separate TatA complex to form the active translocon.

It is found in the cell inner membrane. Functionally, part of the twin-arginine translocation (Tat) system that transports large folded proteins containing a characteristic twin-arginine motif in their signal peptide across membranes. Together with TatC, TatB is part of a receptor directly interacting with Tat signal peptides. TatB may form an oligomeric binding site that transiently accommodates folded Tat precursor proteins before their translocation. The chain is Sec-independent protein translocase protein TatB from Acinetobacter baumannii (strain ATCC 17978 / DSM 105126 / CIP 53.77 / LMG 1025 / NCDC KC755 / 5377).